We begin with the raw amino-acid sequence, 720 residues long: Transcription factor bHLH155 (720 aa).

The span at 522–534 (YPSSSSDQFQTSL) shows a compositional bias: polar residues. Residues 522–558 (YPSSSSDQFQTSLDIPKKNKKRAKPGESSRPRPRDRQ) are disordered. A Nuclear localization signal motif is present at residues 540-547 (NKKRAKPG). One can recognise a bHLH domain in the interval 544–593 (AKPGESSRPRPRDRQLIQDRIKELRELVPNGSKCSIDSLLERTIKHMLFL). Basic and acidic residues predominate over residues 545 to 558 (KPGESSRPRPRDRQ).

The protein belongs to the bHLH protein family. LHW subfamily. As to quaternary structure, homodimer.

It localises to the nucleus. Functionally, transcription factor that may regulate root development. The polypeptide is Transcription factor bHLH155 (BHLH155) (Arabidopsis thaliana (Mouse-ear cress)).